Here is a 349-residue protein sequence, read N- to C-terminus: Phosphate acyltransferase (349 aa).

Belongs to the PlsX family. As to quaternary structure, homodimer. Probably interacts with PlsY.

The protein localises to the cytoplasm. It catalyses the reaction a fatty acyl-[ACP] + phosphate = an acyl phosphate + holo-[ACP]. It functions in the pathway lipid metabolism; phospholipid metabolism. Catalyzes the reversible formation of acyl-phosphate (acyl-PO(4)) from acyl-[acyl-carrier-protein] (acyl-ACP). This enzyme utilizes acyl-ACP as fatty acyl donor, but not acyl-CoA. This Albidiferax ferrireducens (strain ATCC BAA-621 / DSM 15236 / T118) (Rhodoferax ferrireducens) protein is Phosphate acyltransferase.